Consider the following 1042-residue polypeptide: Ubiquitin carboxyl-terminal hydrolase 38 (1042 aa).

Residues 445–949 enclose the USP domain; the sequence is TGLINLGNTC…TAYVLLYKKQ (505 aa). Cys-454 functions as the Nucleophile in the catalytic mechanism. The active-site Proton acceptor is the His-857.

This sequence belongs to the peptidase C19 family. Interacts with isoform 1 of FBXW7; this interaction prevents FBXW7-mediated degradation of MYC. Highly expressed in skeletal muscle. Expressed in adrenal gland.

It is found in the cytoplasm. The protein resides in the nucleus. It carries out the reaction Thiol-dependent hydrolysis of ester, thioester, amide, peptide and isopeptide bonds formed by the C-terminal Gly of ubiquitin (a 76-residue protein attached to proteins as an intracellular targeting signal).. Deubiquitinating enzyme that plays a role in various cellular processes, including DNA repair, cell cycle regulation, and immune response. Plays a role in the inhibition of type I interferon signaling by mediating the 'Lys-33' to 'Lys-48' ubiquitination transition of TBK1 leading to its degradation. Cleaves the ubiquitin chain from the histone demethylase LSD1/KDM1A and prevents it from degradation by the 26S proteasome, thus maintaining LSD1 protein level in cells. Plays a role in the DNA damage response by regulating the deacetylase activity of HDAC1. Mechanistically, removes the 'Lys-63'-linked ubiquitin chain promoting the deacetylase activity of HDAC1 in response to DNA damage. Also acts as a specific deubiquitinase of histone deacetylase 3/HDAC3 and cleaves its 'Lys-63'-linked ubiquitin chains to lower its histone deacetylase activity. Regulates MYC levels and cell proliferation via antagonizing ubiquitin E3 ligase FBXW7 thereby preventing MYC 'Lys-48'-linked ubiquitination and degradation. Participates in antiviral response by removing both 'Lys-48'-linked and 'Lys-63'-linked polyubiquitination of Zika virus envelope protein E. Constitutively associated with IL-33R/IL1RL1, deconjugates its 'Lys-27'-linked polyubiquitination resulting in its autophagic degradation. The protein is Ubiquitin carboxyl-terminal hydrolase 38 (USP38) of Homo sapiens (Human).